The sequence spans 219 residues: Counting factor-associated protein C (219 aa).

Positions 1 to 16 are cleaved as a signal peptide; sequence MKVLILLVSLISVCFS. N-linked (GlcNAc...) asparagine glycosylation is found at N74 and N123.

It is found in the secreted. The protein is Counting factor-associated protein C (cfaC) of Dictyostelium discoideum (Social amoeba).